We begin with the raw amino-acid sequence, 424 residues long: Histidine--tRNA ligase (424 aa).

Positions 1-22 (MSYRRPKGTYDVYPGDAARQEP) are disordered.

The protein belongs to the class-II aminoacyl-tRNA synthetase family. In terms of assembly, homodimer.

The protein localises to the cytoplasm. It catalyses the reaction tRNA(His) + L-histidine + ATP = L-histidyl-tRNA(His) + AMP + diphosphate + H(+). The polypeptide is Histidine--tRNA ligase (Rubrobacter xylanophilus (strain DSM 9941 / JCM 11954 / NBRC 16129 / PRD-1)).